Reading from the N-terminus, the 1427-residue chain is MASWGGEKRGGAEGSPKPAVYATRKTPSVGSQGDQWYLGYPGDQWSSGFPYSWWKNSVGSESKHGEGALDQPQHDVRLEDLGELHRAARSGDVPGVEHILAPGDTGVDKRDRKKSIQQLVPEYKEKQTPESLPQNNNPDWHPTNLTLSDETCQRSKNLKVDDKCPSVSPSMPENQSATKELGQMNLTEREKMDTGVVLLSGNDTLHDLCQSQLPENKESKEAEQDSELTSEEEQERLKGCENKQPQKTSQEPEMAKDCDREDIPIYPVLPHVQKSEEMWIEQGKLEWKNQLKLVINELKQRFGEIYEKYKIPACPEEEPLLDNSTRGTDVKDIPFNLTNNIPGCEEEDASEISVSVVFETFPEQKEPSLKNIIHPYYHPYSGSQEHVCQSSSKFHLHENKLDCDNDNKPGIGHIFSTDKNFHNDASTKKARNPEVVMVEMKEDQEFDLQMTKNMNQNSDSGSTNNYKSLKPKLENLSSLPPDSDRTSEVYLHEELQQDMQKFKNEVNTLEEEFLALKKEDVQLHKDVEEEMEKHRSNSTELSGTLTDGTTVGNDDDGLNQQIPRKENGEHDRPADKTSNEKNEVKNQIYPEADFADSMEPSEIASEDCELSHSVYENFMLLIEQLRMEYKDSASLPRIQDTFCLCEHLLKLKNNHCDQLTVKLKQMENMVSVLQNELSETKKTKLQLELQKIEWEKELYDLRLALKQENEEKRNADMLYNKDSEQLRIKEEECGKVVETKQQLKWNLRRLVKELRTVRNNLDLVVQERNDAQKQLSEEQDARILQDQILTSKQKELEMARKKMNSEISHRHQKEKDLFHEDCMLQEEIALLRLEIDTIKNQNKQKEKKYFEDIEAVKEKNDNLQKIIKLNEETLTETILQYSGQLNNLTAENKILNSELENGKQNQERLEIEMESYRCRLAAAVRDCDQSQTARDLKLDFQRTRQEWVRLHDKMKVDMSGLQAKNEILSEKLSNAESKINSLQIQLHNTRDALGRESLILERVQRDLSQTQCQKKETEQMYQIEQSKLKKYIAKQESVEERLSQLQSENMLLRQQLDDAHKKANSQEKTSSTIQDQFHSAAKNLQAESEKQILSLQEKNKELMDEYNHLKERMDQCEKEKAGRKIDLTEAQETVPSRCLHLDAENEVLQLQQTLFSMKAIQKQCETLQKNKKQLKQEVVNLKSYMERNMLERGKAEWHKLLIEERARKEIEEKLNEAILTLQKQAAVSHEQLVQLREDNTTSIKTQMELTIKDLESEISRIKTSQADFNKTELERYKELYLEEVKVRESLSNELSRTNEMIAEVSTQLTVEKEQTRSRSLFTAYATRPVLESPCVGNLNDSEGLNRKHIPRKKRSALKDMESYLLKMQQKLQNDLTAEVAGSSQTGLHRIPQCSSFSSSSLHLLLCSICQPFFLILQLLLNMNLDPI.

Residues 1–11 (MASWGGEKRGG) are compositionally biased toward basic and acidic residues. Disordered regions lie at residues 1–32 (MASW…VGSQ), 87–189 (AARS…LTER), 213–261 (LPEN…CDRE), 453–485 (NMNQ…DSDR), and 528–586 (EEEM…EVKN). Polar residues-rich tracts occupy residues 129–150 (PESL…LSDE) and 167–178 (VSPSMPENQSAT). A compositionally biased stretch (acidic residues) spans 224–234 (QDSELTSEEEQ). Over residues 453–467 (NMNQNSDSGSTNNYK) the composition is skewed to polar residues. Residues 490 to 545 (YLHEELQQDMQKFKNEVNTLEEEFLALKKEDVQLHKDVEEEMEKHRSNSTELSGTL) are a coiled coil. Residues 528-537 (EEEMEKHRSN) are compositionally biased toward basic and acidic residues. The segment covering 543–552 (GTLTDGTTVG) has biased composition (low complexity). Residues 563 to 584 (PRKENGEHDRPADKTSNEKNEV) are compositionally biased toward basic and acidic residues. Coiled-coil stretches lie at residues 648 to 1129 (LLKL…DLTE) and 1155 to 1309 (FSMK…TQLT).

It belongs to the CCDC144 family.

May play a role in preventing the formation of kidney stones through inhibition of calcium oxalate monohydrate (COM) crystallization, attenuating COM-induced apoptotic injury to renal epithelial cells. May exhibit antilithiatic (preventing the formation of kidney stones) activity through crystal binding, hindering the crystal attachment to renal epithelial cells, a pre-requisite to initiate inflammatory response. The polypeptide is Coiled-coil domain-containing protein 144A (CCDC144A) (Homo sapiens (Human)).